Here is a 204-residue protein sequence, read N- to C-terminus: MIKFVLDTSIFVNPDVRKKFGETPTEAMKTFLHYAENLFGKVEFYMPPGIYRELMHFVEEEEVSPDIELYIIKKPPNVHDIKIPAFVVYELIEDIRRRVDKGLRVAEKAVRESVIDTSNVDKIIQKLRRNYRKALREGILDSKEDFELILLAKEIDGIIVSADVGILTWAEKMGIKWVDAFKFKEVLSELVEKFKRSESEKERK.

It belongs to the HARP family.

The catalysed reaction is Endonucleolytic cleavage of RNA, removing 5'-extranucleotides from tRNA precursor.. In terms of biological role, RNA-free RNase P that catalyzes the removal of the 5'-leader sequence from pre-tRNA to produce the mature 5'-terminus. This Pyrococcus horikoshii (strain ATCC 700860 / DSM 12428 / JCM 9974 / NBRC 100139 / OT-3) protein is RNA-free ribonuclease P.